The following is a 584-amino-acid chain: DNA mismatch repair protein MutL (584 aa).

It belongs to the DNA mismatch repair MutL/HexB family.

Its function is as follows. This protein is involved in the repair of mismatches in DNA. It is required for dam-dependent methyl-directed DNA mismatch repair. May act as a 'molecular matchmaker', a protein that promotes the formation of a stable complex between two or more DNA-binding proteins in an ATP-dependent manner without itself being part of a final effector complex. This Buchnera aphidicola subsp. Acyrthosiphon pisum (strain 5A) protein is DNA mismatch repair protein MutL.